We begin with the raw amino-acid sequence, 350 residues long: Methylthioribose-1-phosphate isomerase (350 aa).

The Proton donor role is filled by Asp241.

This sequence belongs to the eIF-2B alpha/beta/delta subunits family. MtnA subfamily.

Its subcellular location is the cytoplasm. It localises to the nucleus. It carries out the reaction 5-(methylsulfanyl)-alpha-D-ribose 1-phosphate = 5-(methylsulfanyl)-D-ribulose 1-phosphate. It participates in amino-acid biosynthesis; L-methionine biosynthesis via salvage pathway; L-methionine from S-methyl-5-thio-alpha-D-ribose 1-phosphate: step 1/6. In terms of biological role, catalyzes the interconversion of methylthioribose-1-phosphate (MTR-1-P) into methylthioribulose-1-phosphate (MTRu-1-P). The polypeptide is Methylthioribose-1-phosphate isomerase (Nematostella vectensis (Starlet sea anemone)).